The chain runs to 371 residues: Cytochrome b (371 aa).

4 consecutive transmembrane segments (helical) span residues 25 to 45 (FGSL…FLAI), 69 to 90 (WIMQ…YTHI), 105 to 125 (WLSG…GYVL), and 170 to 190 (FFAL…IHII). Positions 75 and 89 each coordinate heme b. 2 residues coordinate heme b: His174 and His188. His193 is an a ubiquinone binding site. 4 helical membrane passes run 218-238 (YKDM…MTFA), 280-300 (LGGT…PFTH), 312-332 (LTQI…WTAT), and 339-358 (FIYI…IMNP).

Belongs to the cytochrome b family. The cytochrome bc1 complex contains 3 respiratory subunits (MT-CYB, CYC1 and UQCRFS1), 2 core proteins (UQCRC1 and UQCRC2) and probably 6 low-molecular weight proteins. Heme b is required as a cofactor.

It localises to the mitochondrion inner membrane. Its function is as follows. Component of the ubiquinol-cytochrome c reductase complex (complex III or cytochrome b-c1 complex) that is part of the mitochondrial respiratory chain. The b-c1 complex mediates electron transfer from ubiquinol to cytochrome c. Contributes to the generation of a proton gradient across the mitochondrial membrane that is then used for ATP synthesis. The polypeptide is Cytochrome b (MT-CYB) (Micruroides euryxanthus (Sonoran coral snake)).